Consider the following 140-residue polypeptide: Nucleoside diphosphate kinase (140 aa).

The ATP site is built by lysine 11, phenylalanine 59, arginine 87, threonine 93, arginine 104, and asparagine 114. Histidine 117 (pros-phosphohistidine intermediate) is an active-site residue.

It belongs to the NDK family. Homotetramer. Mg(2+) is required as a cofactor.

It localises to the cytoplasm. It catalyses the reaction a 2'-deoxyribonucleoside 5'-diphosphate + ATP = a 2'-deoxyribonucleoside 5'-triphosphate + ADP. The catalysed reaction is a ribonucleoside 5'-diphosphate + ATP = a ribonucleoside 5'-triphosphate + ADP. Its function is as follows. Major role in the synthesis of nucleoside triphosphates other than ATP. The ATP gamma phosphate is transferred to the NDP beta phosphate via a ping-pong mechanism, using a phosphorylated active-site intermediate. The polypeptide is Nucleoside diphosphate kinase (Bartonella henselae (strain ATCC 49882 / DSM 28221 / CCUG 30454 / Houston 1) (Rochalimaea henselae)).